The chain runs to 195 residues: MPIGIPKVLFKESTDTTPQWVDIYTRLYKDRIIFLFQLLDDDFSNQIISMLLHLDSESKEELIYFYINSVGGSVLSGISIYDTMNFINSEIVTLCIGIASSISSLILANGKRTKRFILPHSRVLLHQPIMQVSGQASDILIESEEILRLRRILTKIYIENIDQTISRVARDIDRDCFLSSREAKNYGIVDYILTN.

Ser101 serves as the catalytic Nucleophile. Residue His126 is part of the active site.

The protein belongs to the peptidase S14 family.

The protein resides in the plastid. The protein localises to the chloroplast stroma. The catalysed reaction is Hydrolysis of proteins to small peptides in the presence of ATP and magnesium. alpha-casein is the usual test substrate. In the absence of ATP, only oligopeptides shorter than five residues are hydrolyzed (such as succinyl-Leu-Tyr-|-NHMec, and Leu-Tyr-Leu-|-Tyr-Trp, in which cleavage of the -Tyr-|-Leu- and -Tyr-|-Trp bonds also occurs).. Its function is as follows. Cleaves peptides in various proteins in a process that requires ATP hydrolysis. Has a chymotrypsin-like activity. Plays a major role in the degradation of misfolded proteins. In Bigelowiella natans (Pedinomonas minutissima), this protein is ATP-dependent Clp protease proteolytic subunit.